Here is a 249-residue protein sequence, read N- to C-terminus: NADH dehydrogenase [ubiquinone] flavoprotein 2, mitochondrial (249 aa).

Residues 1–32 constitute a mitochondrion transit peptide; the sequence is MFFSAALRARAAGLTAQWGRHVRNLHKTAMQN. N6-acetyllysine is present on Lys-61. [2Fe-2S] cluster is bound by residues Cys-135, Cys-140, Cys-176, and Cys-180. Tyr-193 bears the Phosphotyrosine; by SRC mark. Positions 213–249 are disordered; that stretch reads IPKPGPRSGRFSCEPAGGLTSLTEPPKGPGFGVQAGL.

Belongs to the complex I 24 kDa subunit family. In terms of assembly, core subunit of respiratory chain NADH dehydrogenase (Complex I) which is composed of 45 different subunits. This is a component of the flavoprotein-sulfur (FP) fragment of the enzyme. The cofactor is [2Fe-2S] cluster.

The protein localises to the mitochondrion inner membrane. It catalyses the reaction a ubiquinone + NADH + 5 H(+)(in) = a ubiquinol + NAD(+) + 4 H(+)(out). Its function is as follows. Core subunit of the mitochondrial membrane respiratory chain NADH dehydrogenase (Complex I) which catalyzes electron transfer from NADH through the respiratory chain, using ubiquinone as an electron acceptor. Parts of the peripheral arm of the enzyme, where the electrons from NADH are accepted by flavin mononucleotide (FMN) and then passed along a chain of iron-sulfur clusters by electron tunnelling to the final acceptor ubiquinone. Contains one iron-sulfur cluster. This chain is NADH dehydrogenase [ubiquinone] flavoprotein 2, mitochondrial, found in Gorilla gorilla gorilla (Western lowland gorilla).